A 120-amino-acid chain; its full sequence is Eukaryotic translation initiation factor 4E-binding protein 2 (120 aa).

A phosphothreonine; by MTOR mark is found at Thr37 and Thr46. The YXXXXLphi motif signature appears at 54–60 (YDRKFLL). Ser65 bears the Phosphoserine; by MTOR mark. The residue at position 70 (Thr70) is a Phosphothreonine; by MTOR. Ser83 bears the Phosphoserine mark. Deamidated asparagine occurs at positions 99 and 102. The TOS motif motif lies at 116–120 (FEMDI).

This sequence belongs to the eIF4E-binding protein family. As to quaternary structure, hypophosphorylated EIF4EBP2 interacts with EIF4E; phosphorylation of EIF4EBP2 by mTORC1 causes dissociation of the complex allowing EIF4G1/EIF4G3 to bind and consequent initiation of translation. Interacts (via TOS motif) with RPTOR; promoting phosphorylation by mTORC1. Interacts with PCMT1; required to prevent isoaspartate accumulation and convert isoaspartate to Asp. Post-translationally, phosphorylation at Thr-37, Thr-46, Ser-65, Thr-70 and Ser-83 is mediated by MTOR and corresponds to the hyperphosphorylated form: it abolishes binding to EIF4E by inducing folding of intrinsically disordered regions. First phosphorylated at Thr-37 and Thr-46 by MTOR, inducing folding of region encompassing residues from Pro-18 to Arg-62 of into a four-stranded beta-domain that sequesters the helical YXXXXLPhi motif into a partly buried beta-strand, blocking accessibility to EIF4E. Protein phosphorylated at Thr-37 and Thr-46 is however unstable and subsequent phosphorylation at Ser-65, Thr-70 and Ser-83 is required to stabilize the fold, decreasing affinity for EIF4E by a factor of 4000. Phosphorylated in response to insulin, EGF and PDGF. In terms of processing, deamidated at Asn-99 and Asn-102 to aspartate (Asp) in brain. Deamidation promotes interaction with RPTOR, subsequent phosphorylation by mTORC1 and increased translation, leading to impair kinetics of excitatory synaptic transmission. Deamidation takes place during postnatal development, when the PI3K-Akt-mTOR signaling is reduced, suggesting it acts as a compensatory mechanism to promote translation despite attenuated PI3K-Akt-mTOR signaling in neuron development. Deamidation converts Asn residues into a mixture of Asp and isoaspartate; interactions with PCMT1 is required to prevent isoaspartate accumulation and convert isoaspartate to Asp. Enriched in brain.

It localises to the cytoplasm. The protein resides in the nucleus. In terms of biological role, repressor of translation initiation involved in synaptic plasticity, learning and memory formation. Regulates EIF4E activity by preventing its assembly into the eIF4F complex: hypophosphorylated form of EIF4EBP2 competes with EIF4G1/EIF4G3 and strongly binds to EIF4E, leading to repress translation. In contrast, hyperphosphorylated form dissociates from EIF4E, allowing interaction between EIF4G1/EIF4G3 and EIF4E, leading to initiation of translation. EIF4EBP2 is enriched in brain and acts as a regulator of synapse activity and neuronal stem cell renewal via its ability to repress translation initiation. Mediates the regulation of protein translation by hormones, growth factors and other stimuli that signal through the MAP kinase and mTORC1 pathways. The chain is Eukaryotic translation initiation factor 4E-binding protein 2 from Mus musculus (Mouse).